The chain runs to 179 residues: Large ribosomal subunit protein uL6 (179 aa).

This sequence belongs to the universal ribosomal protein uL6 family. As to quaternary structure, part of the 50S ribosomal subunit.

Functionally, this protein binds to the 23S rRNA, and is important in its secondary structure. It is located near the subunit interface in the base of the L7/L12 stalk, and near the tRNA binding site of the peptidyltransferase center. This is Large ribosomal subunit protein uL6 from Streptomyces avermitilis (strain ATCC 31267 / DSM 46492 / JCM 5070 / NBRC 14893 / NCIMB 12804 / NRRL 8165 / MA-4680).